A 213-amino-acid polypeptide reads, in one-letter code: Nucleolar protein 12 (213 aa).

A coiled-coil region spans residues 32–95 (GFHKRKVERK…RLVTAKTESV (64 aa)). A disordered region spans residues 117-213 (ARLLGLPTPE…LTGKARHSGE (97 aa)). Basic residues-rich tracts occupy residues 169–181 (AHSR…KRLR) and 197–213 (SKTR…HSGE).

Belongs to the RRP17 family. In terms of assembly, interacts with KIAA1191.

Its subcellular location is the nucleus. It is found in the nucleolus. The protein localises to the cytoplasm. Its function is as follows. Multifunctional RNA binding protein that plays a role in RNA metabolism and DNA maintenance. Participates in the resolution of DNA stress and the maintenance of genome integrity by localizing to sites of DNA insults. Also plays a role in proper nucleolar organization by limiting nucleolar size and regulating nucleolar number. Mechanistically, regulates the nucleolar levels of fibrillarin and nucleolin, two key players in pre-rRNA processing and ribosome assembly. The polypeptide is Nucleolar protein 12 (NOL12) (Bos taurus (Bovine)).